Here is a 1434-residue protein sequence, read N- to C-terminus: Protein patched homolog 1 (1434 aa).

The segment covering 1-13 (MASAGNAAGALGR) has biased composition (low complexity). The disordered stretch occupies residues 1–34 (MASAGNAAGALGRQAGGGRRRRTGGPHRAAPDRD). The Cytoplasmic segment spans residues 1–86 (MASAGNAAGA…GCYIQKNCGK (86 aa)). The chain crosses the membrane as a helical span at residues 87 to 107 (FLVVGLLIFGAFAVGLKAANL). The Extracellular portion of the chain corresponds to 108–422 (ETNVEELWVE…LDDILKSFSD (315 aa)). 4 N-linked (GlcNAc...) asparagine glycosylation sites follow: asparagine 127, asparagine 298, asparagine 335, and asparagine 400. The chain crosses the membrane as a helical span at residues 423–443 (VSVIRVASGYLLMLAYACLTM). The SSD domain maps to 424-584 (SVIRVASGYL…LLIFPAILSM (161 aa)). Topologically, residues 444–458 (LRWDCSKSQGAVGLA) are cytoplasmic. The helical transmembrane segment at 459-479 (GVLLVALSVAAGLGLCSLIGI) threads the bilayer. The Extracellular segment spans residues 480 to 487 (SFNAATTQ). Residues 488 to 508 (VLPFLALGVGVDDVFLLAHAF) traverse the membrane as a helical segment. At 509 to 533 (SETGQNKRIPFEDRTGECLKRTGAS) the chain is on the cytoplasmic side. Residues 534–554 (VALTSISNVTAFFMAALIPIP) traverse the membrane as a helical segment. Residues 555–563 (ALRAFSLQA) lie on the Extracellular side of the membrane. A helical transmembrane segment spans residues 564 to 584 (AVVVVFNFAMVLLIFPAILSM). Topologically, residues 585-734 (DLYRREDRRL…HYAPFLLKPK (150 aa)) are cytoplasmic. The helical transmembrane segment at 735-755 (AKVVVILLFLGLLGVSLYGTT) threads the bilayer. The Extracellular portion of the chain corresponds to 756-1013 (RVRDGLDLTD…WEQYISLRHW (258 aa)). Residues asparagine 861 and asparagine 986 are each glycosylated (N-linked (GlcNAc...) asparagine). A helical membrane pass occupies residues 1014-1034 (LLLSISVVLACTFLVCAVFLL). Residues 1035–1039 (NPWTA) lie on the Cytoplasmic side of the membrane. Residues 1040-1060 (GIIVMVLALMTVELFGMMGLI) form a helical membrane-spanning segment. Topologically, residues 1061-1069 (GIKLSAVPV) are extracellular. Residues 1070–1090 (VILIASVGIGVEFTVHVALAF) traverse the membrane as a helical segment. The Cytoplasmic portion of the chain corresponds to 1091-1107 (LTAIGDKNHRAMLALEH). Residues 1108 to 1128 (MFAPVLDGAVSTLLGVLMLAG) traverse the membrane as a helical segment. The Extracellular portion of the chain corresponds to 1129–1140 (SEFDFIVRYFFA). Residues 1141-1161 (VLAILTVLGVLNGLVLLPVLL) form a helical membrane-spanning segment. Topologically, residues 1162–1434 (SFFGPCPEVS…EERPWGSSSN (273 aa)) are cytoplasmic. Disordered regions lie at residues 1175-1219 (GLNR…TVSG), 1257-1348 (HPDS…SSVP), and 1368-1396 (HPPP…HGVF). Residue threonine 1181 is modified to Phosphothreonine. Serine 1183 carries the phosphoserine modification. Over residues 1204-1213 (SDSSDSEYSS) the composition is skewed to low complexity. Basic and acidic residues predominate over residues 1288-1297 (PRRDPPREGL). Positions 1335 to 1348 (PRNPTSTAMGSSVP) are enriched in polar residues. A Glycyl lysine isopeptide (Lys-Gly) (interchain with G-Cter in ubiquitin) cross-link involves residue lysine 1413.

This sequence belongs to the patched family. Interacts with SNX17. Interacts with IHH. Interacts with G-protein coupled receptor GPR37L1. Glycosylation is necessary for SHH binding. Post-translationally, in the absence of Hh ligands, ubiquitination by ITCH at Lys-1413 promotes endocytosis and both proteasomal and lysosomal degradation. Detected in cerebellar Bergmann glia cells (at protein level). In the developing embryo, first detected within the ventral neural tube and later in the somites and limb buds. Expression in the limb buds is restricted to the posterior ectoderm surrounding the zone of polarizing activity. In the adult, expression is seen in brain, lung, liver, kidney and ocular tissues; lower levels in heart, skeletal muscle, and testis.

The protein localises to the cell membrane. Its function is as follows. Acts as a receptor for sonic hedgehog (SHH), indian hedgehog (IHH) and desert hedgehog (DHH). Associates with the smoothened protein (SMO) to transduce the hedgehog's proteins signal. Seems to have a tumor suppressor function, as inactivation of this protein is probably a necessary, if not sufficient step for tumorigenesis. The chain is Protein patched homolog 1 (Ptch1) from Mus musculus (Mouse).